Here is a 340-residue protein sequence, read N- to C-terminus: Ketol-acid reductoisomerase (NADP(+)) (340 aa).

Residues 1–183 (MAITVYYDKD…GGGRTGIIET (183 aa)) form the KARI N-terminal Rossmann domain. NADP(+)-binding positions include 26–29 (FGSQ), arginine 49, serine 52, serine 54, and 84–87 (DEIQ). Histidine 109 is an active-site residue. Glycine 135 is an NADP(+) binding site. Residues 184–329 (TFKAETETDL…RNLRAMMPWI (146 aa)) form the KARI C-terminal knotted domain. 4 residues coordinate Mg(2+): aspartate 192, glutamate 196, glutamate 228, and glutamate 232. Serine 253 contributes to the substrate binding site.

This sequence belongs to the ketol-acid reductoisomerase family. The cofactor is Mg(2+).

The catalysed reaction is (2R)-2,3-dihydroxy-3-methylbutanoate + NADP(+) = (2S)-2-acetolactate + NADPH + H(+). The enzyme catalyses (2R,3R)-2,3-dihydroxy-3-methylpentanoate + NADP(+) = (S)-2-ethyl-2-hydroxy-3-oxobutanoate + NADPH + H(+). It functions in the pathway amino-acid biosynthesis; L-isoleucine biosynthesis; L-isoleucine from 2-oxobutanoate: step 2/4. Its pathway is amino-acid biosynthesis; L-valine biosynthesis; L-valine from pyruvate: step 2/4. Functionally, involved in the biosynthesis of branched-chain amino acids (BCAA). Catalyzes an alkyl-migration followed by a ketol-acid reduction of (S)-2-acetolactate (S2AL) to yield (R)-2,3-dihydroxy-isovalerate. In the isomerase reaction, S2AL is rearranged via a Mg-dependent methyl migration to produce 3-hydroxy-3-methyl-2-ketobutyrate (HMKB). In the reductase reaction, this 2-ketoacid undergoes a metal-dependent reduction by NADPH to yield (R)-2,3-dihydroxy-isovalerate. The polypeptide is Ketol-acid reductoisomerase (NADP(+)) (Campylobacter jejuni subsp. jejuni serotype O:2 (strain ATCC 700819 / NCTC 11168)).